The primary structure comprises 370 residues: Acyl-CoA:lysophosphatidylglycerol acyltransferase 1 (370 aa).

Residues 22 to 42 (FAFMVVNNLVAIPSYICYVII) form a helical membrane-spanning segment. The HXXXXD motif signature appears at 101–106 (HQATGD). A helical membrane pass occupies residues 342–362 (LWIFLIQSFAFLSGYMWYNII).

The protein belongs to the 1-acyl-sn-glycerol-3-phosphate acyltransferase family. Highly expressed in liver and placenta. Also expressed in peripheral blood, lung, kidney and brain. Detected at lower levels in colon. High expression is detected in brain and testis.

The protein localises to the endoplasmic reticulum membrane. The enzyme catalyses a 2-acyl-sn-glycero-3-phosphoethanolamine + octadecanoyl-CoA = 1-octadecanoyl-2-acyl-sn-glycero-3-phosphoethanolamine + CoA. The catalysed reaction is 2-(9Z-octadecenoyl)-sn-glycero-3-phosphoethanolamine + octadecanoyl-CoA = 1-octadecanoyl-2-(9Z-octadecenoyl)-sn-glycero-3-phosphoethanolamine + CoA. It catalyses the reaction a 2-acyl-sn-glycero-3-phosphoethanolamine + hexadecanoyl-CoA = 1-hexadecanoyl-2-acyl-sn-glycero-3-phosphoethanolamine + CoA. It carries out the reaction 2-(9Z-octadecenoyl)-sn-glycero-3-phosphoethanolamine + hexadecanoyl-CoA = 1-hexadecanoyl-2-(9Z-octadecenoyl)-sn-glycero-3-phosphoethanolamine + CoA. The enzyme catalyses 1-tetradecanoyl-sn-glycero-3-phospho-(1'-sn-glycerol) + hexadecanoyl-CoA = 1-tetradecanoyl-2-hexadecanoyl-sn-glycero-3-phospho-(1'-sn-glycerol) + CoA. The catalysed reaction is 1-hexadecanoyl-sn-glycero-3-phospho-(1'-sn-glycerol) + dodecanoyl-CoA = 1-hexadecanoyl-2-dodecanoyl-sn-glycero-3-phospho-(1'-sn-glycerol) + CoA. It catalyses the reaction 1-hexadecanoyl-sn-glycero-3-phospho-(1'-sn-glycerol) + hexadecanoyl-CoA = 1,2-dihexadecanoyl-sn-glycero-3-phospho-(1'-sn-glycerol) + CoA. It carries out the reaction 1-hexadecanoyl-sn-glycero-3-phospho-(1'-sn-glycerol) + octadecanoyl-CoA = 1-hexadecanoyl-2-octadecanoyl-sn-glycero-3-phospho-(1'-sn-glycerol) + CoA. The enzyme catalyses 1-octadecanoyl-sn-glycero-3-phospho-(1'-sn-glycerol) + hexadecanoyl-CoA = 1-octadecanoyl-2-hexadecanoyl-sn-glycero-3-phospho-(1'-sn-glycerol) + CoA. The catalysed reaction is 1-(9Z-octadecenoyl)-sn-glycero-3-phospho-(1'-sn-glycerol) + dodecanoyl-CoA = 1-(9Z-octadecenoyl)-2-dodecanoyl-sn-glycero-3-phospho-(1'-sn-glycerol) + CoA. It catalyses the reaction 1-hexadecanoyl-sn-glycero-3-phospho-(1'-sn-glycerol) + (9Z)-octadecenoyl-CoA = 1-hexadecanoyl-2-(9Z-octadecenoyl)-sn-glycero-3-phospho-(1'-sn-glycerol) + CoA. It carries out the reaction 1-(9Z-octadecenoyl)-sn-glycero-3-phospho-(1'-sn-glycerol) + hexadecanoyl-CoA = 1-(9Z-octadecenoyl)-2-hexadecanoyl-sn-glycero-3-phospho-(1'-sn-glycerol) + CoA. The enzyme catalyses 1-(9Z-octadecenoyl)-sn-glycero-3-phospho-(1'-sn-glycerol) + (9Z)-octadecenoyl-CoA = 1,2-di-(9Z-octadecenoyl)-sn-glycero-3-phospho-(1'-sn-glycerol) + CoA. The catalysed reaction is a 2-acylglycerol + an acyl-CoA = a 1,2-diacylglycerol + CoA. It catalyses the reaction a 2-acylglycerol + hexadecanoyl-CoA = a 1-hexadecanoyl-2-acylglycerol + CoA. It carries out the reaction a 1-acylglycerol + hexadecanoyl-CoA = an hexadecanoyl-acylglycerol + CoA. The enzyme catalyses a 2-acyl-sn-glycero-3-phosphocholine + an acyl-CoA = a 1,2-diacyl-sn-glycero-3-phosphocholine + CoA. The catalysed reaction is 2-(9Z-octadecenoyl)-sn-glycero-3-phosphocholine + octadecanoyl-CoA = 1-octadecanoyl-2-(9Z-octadecenoyl)-sn-glycero-3-phosphocholine + CoA. It catalyses the reaction 2-(9Z,12Z-octadecadienoyl)-sn-glycero-3-phosphocholine + octadecanoyl-CoA = 1-octadecanoyl-2-(9Z,12Z)-octadecadienoyl-sn-glycero-3-phosphocholine + CoA. It carries out the reaction 2-(5Z,8Z,11Z,14Z)-eicosatetraenoyl-sn-glycero-3-phosphocholine + octadecanoyl-CoA = 1-octadecanoyl-2-(5Z,8Z,11Z,14Z-eicosatetraenoyl)-sn-glycero-3-phosphocholine + CoA. The enzyme catalyses 2-(9Z-octadecenoyl)-sn-glycero-3-phosphocholine + hexadecanoyl-CoA = 1-hexadecanoyl-2-(9Z-octadecenoyl)-sn-glycero-3-phosphocholine + CoA. The catalysed reaction is 2-(9Z-octadecenoyl)-sn-glycero-3-phospho-L-serine + hexadecanoyl-CoA = 1-hexadecanoyl-2-(9Z-octadecenoyl)-sn-glycero-3-phospho-L-serine + CoA. It catalyses the reaction 2-(4Z,7Z,10Z,13Z,16Z,19Z-docosahexaenoyl)-sn-glycero-3-phosphocholine + octadecanoyl-CoA = 1-octadecanoyl-2-(4Z,7Z,10Z,13Z,16Z,19Z-docosahexaenoyl)-sn-glycero-3-phosphocholine + CoA. It carries out the reaction 1-(9Z-octadecenoyl)-sn-glycero-3-phospho-L-serine + octadecanoyl-CoA = 1-(9Z-octadecenoyl)-2-octadecanoyl-sn-glycero-3-phospho-L-serine + CoA. The enzyme catalyses a 2-acyl-sn-glycero-3-phosphoethanolamine + a fatty acyl-CoA = a 1,2-diacyl-sn-glycero-3-phosphoethanolamine + CoA. Its function is as follows. Lysophospholipid acyltransferase involved in fatty acyl chain remodeling of glycerophospholipids in the endoplasmic reticulum membrane. Selectively catalyzes the transfer and esterification of saturated long-chain fatty acids from acyl-CoA to the sn-1 position of 1-lyso-2-acyl phosphatidylethanolamines (1-lyso-PE, LPE), with a preference for stearoyl CoA over palmitoyl CoA as acyl donor. Acts in concert with an unknown phospholipase A1 to convert palmitate phosphatidylethanolamine (PE) species into stearate ones. Provides substrates to the PE methylation pathway, controlling stearate/palmitate composition of PE and phosphatidylcholine (PC) species with an overall impact on de novo hepatic lipid synthesis, body fat content and life span. Can acylate lysophosphatidylglycerols (LPG) using various saturated fatty acyl-CoAs as acyl donors. Can also acylate monoacylglycerols with a preference for 2-monoacylglycerols over 1-monoacylglycerols. Has no activity toward lysophosphatidic acids (LPA). This Homo sapiens (Human) protein is Acyl-CoA:lysophosphatidylglycerol acyltransferase 1.